A 232-amino-acid polypeptide reads, in one-letter code: 5'-methylthioadenosine/S-adenosylhomocysteine nucleosidase (232 aa).

Glu-12 (proton acceptor) is an active-site residue. Substrate-binding positions include Gly-78, Ile-152, and 173–174; that span reads ME. Asp-197 serves as the catalytic Proton donor.

Belongs to the PNP/UDP phosphorylase family. MtnN subfamily. In terms of assembly, homodimer.

The enzyme catalyses S-adenosyl-L-homocysteine + H2O = S-(5-deoxy-D-ribos-5-yl)-L-homocysteine + adenine. It carries out the reaction S-methyl-5'-thioadenosine + H2O = 5-(methylsulfanyl)-D-ribose + adenine. It catalyses the reaction 5'-deoxyadenosine + H2O = 5-deoxy-D-ribose + adenine. It participates in amino-acid biosynthesis; L-methionine biosynthesis via salvage pathway; S-methyl-5-thio-alpha-D-ribose 1-phosphate from S-methyl-5'-thioadenosine (hydrolase route): step 1/2. Its function is as follows. Catalyzes the irreversible cleavage of the glycosidic bond in both 5'-methylthioadenosine (MTA) and S-adenosylhomocysteine (SAH/AdoHcy) to adenine and the corresponding thioribose, 5'-methylthioribose and S-ribosylhomocysteine, respectively. Also cleaves 5'-deoxyadenosine, a toxic by-product of radical S-adenosylmethionine (SAM) enzymes, into 5-deoxyribose and adenine. Thus, is required for in vivo function of the radical SAM enzymes biotin synthase and lipoic acid synthase, that are inhibited by 5'-deoxyadenosine accumulation. This is 5'-methylthioadenosine/S-adenosylhomocysteine nucleosidase from Salmonella dublin (strain CT_02021853).